Consider the following 104-residue polypeptide: L-rhamnose mutarotase (104 aa).

A substrate-binding site is contributed by Tyr18. His22 acts as the Proton donor in catalysis. Residues Tyr41 and Trp76–Trp77 each bind substrate.

The protein belongs to the rhamnose mutarotase family. In terms of assembly, homodimer.

The protein localises to the cytoplasm. It catalyses the reaction alpha-L-rhamnose = beta-L-rhamnose. Its pathway is carbohydrate metabolism; L-rhamnose metabolism. Functionally, involved in the anomeric conversion of L-rhamnose. In Sinorhizobium medicae (strain WSM419) (Ensifer medicae), this protein is L-rhamnose mutarotase.